We begin with the raw amino-acid sequence, 262 residues long: Hemin import ATP-binding protein HmuV (262 aa).

Positions 1 to 247 (MRNLTLQRGR…ERIKQIFAFD (247 aa)) constitute an ABC transporter domain. 31 to 38 (GPNGTGKS) contacts ATP.

It belongs to the ABC transporter superfamily. Heme (hemin) importer (TC 3.A.1.14.5) family. In terms of assembly, the complex is composed of two ATP-binding proteins (HmuV), two transmembrane proteins (HmuU) and a solute-binding protein (HmuT).

It localises to the cell inner membrane. Part of the ABC transporter complex HmuTUV involved in hemin import. Responsible for energy coupling to the transport system. In Plesiomonas shigelloides (Aeromonas shigelloides), this protein is Hemin import ATP-binding protein HmuV.